The following is a 555-amino-acid chain: Poly(A) polymerase PAPa (555 aa).

The disordered stretch occupies residues 1-20; sequence MNNQAYGVTPPISVANSTPK. Residues 86-88, 99-101, D153, K214, Y223, and 232-233 each bind ATP; these read FGS, DID, and GV. 3 residues coordinate Mg(2+): D99, D101, and D153. Residues 532 to 555 form a disordered region; sequence KRKRAVSKNEGKKKPKSVGTVSAA.

This sequence belongs to the poly(A) polymerase family. It depends on Mg(2+) as a cofactor. Mn(2+) serves as cofactor.

The protein resides in the nucleus. The enzyme catalyses RNA(n) + ATP = RNA(n)-3'-adenine ribonucleotide + diphosphate. Its function is as follows. Polymerase that creates the 3'-poly(A) tail of mRNA's. May acquire specificity through interaction with a cleavage and polyadenylation factor. This is Poly(A) polymerase PAPa (PAPA) from Candida albicans (strain SC5314 / ATCC MYA-2876) (Yeast).